Reading from the N-terminus, the 307-residue chain is Ubiquitin recognition factor in ER-associated degradation protein 1 (307 aa).

M1 carries the N-acetylmethionine modification. A phosphoserine mark is found at S129, S231, S245, S247, and S299. Disordered regions lie at residues 230-255 and 282-307; these read GSGNRLDGKKKGVEPSPSPIKPGDIK and EEDEAGGRFVAFSGEGQSLRKKGRKP.

The protein belongs to the UFD1 family. Interacts with USP13. Heterodimer with NPLOC4, this heterodimer binds VCP and inhibits Golgi membrane fusion. Interacts with ZFAND2B; probably through VCP.

The protein localises to the nucleus. It localises to the cytoplasm. It is found in the cytosol. It participates in protein degradation; proteasomal ubiquitin-dependent pathway. Its function is as follows. Essential component of the ubiquitin-dependent proteolytic pathway which degrades ubiquitin fusion proteins. The ternary complex containing UFD1, VCP and NPLOC4 binds ubiquitinated proteins and is necessary for the export of misfolded proteins from the ER to the cytoplasm, where they are degraded by the proteasome. The NPLOC4-UFD1-VCP complex regulates spindle disassembly at the end of mitosis and is necessary for the formation of a closed nuclear envelope. It may be involved in the development of some ectoderm-derived structures. Acts as a negative regulator of type I interferon production via the complex formed with VCP and NPLOC4, which binds to RIGI and recruits RNF125 to promote ubiquitination and degradation of RIGI. This is Ubiquitin recognition factor in ER-associated degradation protein 1 from Rattus norvegicus (Rat).